The following is a 2168-amino-acid chain: Genome polyprotein (2168 aa).

The segment at 1 to 20 (MGMQMSKNTAGSHTTVTQAS) is disordered. Residue G2 is the site of N-myristoyl glycine; by host attachment. Residues 2–1479 (GMQMSKNTAG…NVSIATTILS (1478 aa)) are Cytoplasmic-facing. Amphipathic alpha-helix regions lie at residues 551 to 567 (ALQA…ISSV) and 554 to 575 (APVE…TAQD). Positions 576–589 (TQPSSHNISTSETP) are enriched in polar residues. The interval 576–607 (TQPSSHNISTSETPALQAAETGASSNASDEGM) is disordered. Residues H856 and D874 each act as for protease 2A activity in the active site. C891 and C893 together coordinate Zn(2+). C945 (for protease 2A activity) is an active-site residue. Zn(2+)-binding residues include C951 and H953. The membrane-binding stretch occupies residues 1085-1157 (GDDWLKKFTS…EHSCPTTEQQ (73 aa)). The oligomerization stretch occupies residues 1085–1223 (GDDWLKKFTS…TAGTGKSLAT (139 aa)). The RNA-binding stretch occupies residues 1106–1110 (AEKIM). An SF3 helicase domain is found at 1189 to 1347 (EKRILGYIQF…YKTHNGTLDV (159 aa)). Zn(2+) contacts are provided by C1354, C1365, and C1370. The C4-type; degenerate zinc-finger motif lies at 1354–1370 (CEDCCPANFKTCMPLIC). Residues 1397–1404 (EWKRRNQV) form an RNA-binding region. The segment at 1408 to 1413 (YVRLFQ) is oligomerization. The stretch at 1480 to 1495 (SLVLLTSVITLVYLVY) is an intramembrane region. The Cytoplasmic segment spans residues 1496-2168 (RLFAGYQGPY…SLLREWYEKF (673 aa)). At Y1505 the chain carries O-(5'-phospho-RNA)-tyrosine. The region spanning 1525–1703 (GPLMDFGVGM…FCAALKRSYF (179 aa)) is the Peptidase C3 domain. Residues H1564, E1595, and C1671 each act as for protease 3C activity in the active site. Residues 1934 to 2048 (GELFGFDYTA…ASYPYRIDPA (115 aa)) enclose the RdRp catalytic domain. Residues D1940 and D2035 each coordinate Mg(2+).

This sequence belongs to the picornaviruses polyprotein family. In terms of assembly, interacts with capsid protein VP1 and capsid protein VP3 to form heterotrimeric protomers. Interacts with capsid protein VP0, and capsid protein VP3 to form heterotrimeric protomers. Five protomers subsequently associate to form pentamers which serve as building blocks for the capsid. Interacts with capsid protein VP2, capsid protein VP3 and capsid protein VP4 following cleavage of capsid protein VP0. As to quaternary structure, interacts with capsid protein VP1 and capsid protein VP3 in the mature capsid. In terms of assembly, interacts with capsid protein VP0 and capsid protein VP1 to form heterotrimeric protomers. Five protomers subsequently associate to form pentamers which serve as building blocks for the capsid. Interacts with capsid protein VP4 in the mature capsid. Interacts with protein 2C; this interaction may be important for virion morphogenesis. Interacts with capsid protein VP1 and capsid protein VP3. As to quaternary structure, homodimer. In terms of assembly, homohexamer; forms a hexameric ring structure with 6-fold symmetry characteristic of AAA+ ATPases. Interacts (via N-terminus) with host RTN3 (via reticulon domain); this interaction is important for viral replication. Interacts with capsid protein VP3; this interaction may be important for virion morphogenesis. Interacts with protein 3CD. As to quaternary structure, homodimer. Interacts with host GBF1. Interacts (via GOLD domain) with host ACBD3 (via GOLD domain); this interaction allows the formation of a viral protein 3A/ACBD3 heterotetramer with a 2:2 stoichiometry, which will stimulate the recruitment of host PI4KB in order to synthesize PI4P at the viral RNA replication sites. In terms of assembly, interacts with RNA-directed RNA polymerase. Interacts with protein 3AB and with RNA-directed RNA polymerase. As to quaternary structure, interacts with Viral protein genome-linked and with protein 3CD. Mg(2+) is required as a cofactor. In terms of processing, specific enzymatic cleavages in vivo by the viral proteases yield processing intermediates and the mature proteins. Myristoylation is required for the formation of pentamers during virus assembly. Further assembly of 12 pentamers and a molecule of genomic RNA generates the provirion. Post-translationally, during virion maturation, immature virions are rendered infectious following cleavage of VP0 into VP4 and VP2. This maturation seems to be an autocatalytic event triggered by the presence of RNA in the capsid and it is followed by a conformational change infectious virion. In terms of processing, myristoylation is required during RNA encapsidation and formation of the mature virus particle. VPg is uridylylated by the polymerase into VPg-pUpU. This acts as a nucleotide-peptide primer for the genomic RNA replication.

It localises to the virion. Its subcellular location is the host cytoplasm. The protein resides in the host cytoplasmic vesicle membrane. The protein localises to the host nucleus. The catalysed reaction is a ribonucleoside 5'-triphosphate + H2O = a ribonucleoside 5'-diphosphate + phosphate + H(+). It catalyses the reaction Selective cleavage of Tyr-|-Gly bond in the picornavirus polyprotein.. The enzyme catalyses RNA(n) + a ribonucleoside 5'-triphosphate = RNA(n+1) + diphosphate. It carries out the reaction Selective cleavage of Gln-|-Gly bond in the poliovirus polyprotein. In other picornavirus reactions Glu may be substituted for Gln, and Ser or Thr for Gly.. Replication or transcription is subject to high level of random mutations by the nucleotide analog ribavirin. In terms of biological role, forms an icosahedral capsid of pseudo T=3 symmetry with capsid proteins VP2 and VP3. The capsid is 300 Angstroms in diameter, composed of 60 copies of each capsid protein and enclosing the viral positive strand RNA genome. Capsid protein VP1 mainly forms the vertices of the capsid. Capsid protein VP1 interacts with host cell receptor to provide virion attachment to target host cells. This attachment induces virion internalization. Tyrosine kinases are probably involved in the entry process. After binding to its receptor, the capsid undergoes conformational changes. Capsid protein VP1 N-terminus (that contains an amphipathic alpha-helix) and capsid protein VP4 are externalized. Together, they shape a pore in the host membrane through which viral genome is translocated to host cell cytoplasm. Its function is as follows. Forms an icosahedral capsid of pseudo T=3 symmetry with capsid proteins VP2 and VP3. The capsid is 300 Angstroms in diameter, composed of 60 copies of each capsid protein and enclosing the viral positive strand RNA genome. Functionally, lies on the inner surface of the capsid shell. After binding to the host receptor, the capsid undergoes conformational changes. Capsid protein VP4 is released, Capsid protein VP1 N-terminus is externalized, and together, they shape a pore in the host membrane through which the viral genome is translocated into the host cell cytoplasm. Component of immature procapsids, which is cleaved into capsid proteins VP4 and VP2 after maturation. Allows the capsid to remain inactive before the maturation step. In terms of biological role, cysteine protease that cleaves viral polyprotein and specific host proteins. It is responsible for the autocatalytic cleavage between the P1 and P2 regions, which is the first cleavage occurring in the polyprotein. Also cleaves the host translation initiation factor EIF4G1, in order to shut down the capped cellular mRNA translation. Inhibits the host nucleus-cytoplasm protein and RNA trafficking by cleaving host members of the nuclear pores. Counteracts stress granule formation probably by antagonizing its assembly or promoting its dissassembly. Its function is as follows. Plays an essential role in the virus replication cycle by acting as a viroporin. Creates a pore in the host endoplasmic reticulum and as a consequence releases Ca2+ in the cytoplasm of infected cell. In turn, high levels of cytoplasmic calcium may trigger membrane trafficking and transport of viral ER-associated proteins to viroplasms, sites of viral genome replication. Functionally, induces and associates with structural rearrangements of intracellular membranes. Displays RNA-binding, nucleotide binding and NTPase activities. May play a role in virion morphogenesis and viral RNA encapsidation by interacting with the capsid protein VP3. Localizes the viral replication complex to the surface of membranous vesicles. Together with protein 3CD binds the Cis-Active RNA Element (CRE) which is involved in RNA synthesis initiation. Acts as a cofactor to stimulate the activity of 3D polymerase, maybe through a nucleid acid chaperone activity. In terms of biological role, localizes the viral replication complex to the surface of membranous vesicles. It inhibits host cell endoplasmic reticulum-to-Golgi apparatus transport and causes the disassembly of the Golgi complex, possibly through GBF1 interaction. This would result in depletion of MHC, trail receptors and IFN receptors at the host cell surface. Plays an essential role in viral RNA replication by recruiting ACBD3 and PI4KB at the viral replication sites, thereby allowing the formation of the rearranged membranous structures where viral replication takes place. Its function is as follows. Acts as a primer for viral RNA replication and remains covalently bound to viral genomic RNA. VPg is uridylylated prior to priming replication into VPg-pUpU. The oriI viral genomic sequence may act as a template for this. The VPg-pUpU is then used as primer on the genomic RNA poly(A) by the RNA-dependent RNA polymerase to replicate the viral genome. During genome replication, the VPg-RNA linkage is removed by the host TDP2, thereby accelerating replication. During the late stage of the replication cycle, host TDP2 is excluded from sites of viral RNA synthesis and encapsidation, allowing for the generation of progeny virions. Functionally, involved in the viral replication complex and viral polypeptide maturation. It exhibits protease activity with a specificity and catalytic efficiency that is different from protease 3C. Protein 3CD lacks polymerase activity. Protein 3CD binds to the 5'UTR of the viral genome. Replicates the viral genomic RNA on the surface of intracellular membranes. May form linear arrays of subunits that propagate along a strong head-to-tail interaction called interface-I. Covalently attaches UMP to a tyrosine of VPg, which is used to prime RNA synthesis. The positive stranded RNA genome is first replicated at virus induced membranous vesicles, creating a dsRNA genomic replication form. This dsRNA is then used as template to synthesize positive stranded RNA genomes. ss(+)RNA genomes are either translated, replicated or encapsidated. In terms of biological role, major viral protease that mediates proteolytic processing of the polyprotein. Cleaves host EIF5B, contributing to host translation shutoff. Also cleaves host PABPC1, contributing to host translation shutoff. Cleaves host NLRP1, triggers host N-glycine-mediated degradation of the autoinhibitory NLRP1 N-terminal fragment. This Sus scrofa (Pig) protein is Genome polyprotein.